Consider the following 815-residue polypeptide: Dual specificity tyrosine-phosphorylation-regulated kinase mbk-2 (815 aa).

Disordered stretches follow at residues 1–49, 67–146, 185–204, and 298–395; these read MAAL…NYTR, PSSF…PLGT, YEFP…SQQH, and ALPS…FRPE. 2 stretches are compositionally biased toward polar residues: residues 7-25 and 40-49; these read FTRN…TQQG and SKMSNINYTR. Low complexity predominate over residues 68-78; that stretch reads SSFSGASSSSS. Composition is skewed to polar residues over residues 119–140 and 190–204; these read SGNT…TSNL and GQAQ…SQQH. Positions 301–316 are enriched in low complexity; sequence SVGTSSSNGSSNSSSG. Residues 325–351 are compositionally biased toward polar residues; sequence LMTQSIGGPNKHLSASHSTLNTASTHD. Serine 361 carries the post-translational modification Phosphoserine; by cdk-1. Residues 363–391 are compositionally biased toward low complexity; sequence SNESLSRSHTSSSGGSQGGHNSNSGSNSG. In terms of domain architecture, Protein kinase spans 460–773; sequence YEVLKVIGKG…PAQALKHKWL (314 aa). ATP contacts are provided by residues 466 to 474 and lysine 489; that span reads IGKGSFGQV. Aspartate 586 (proton acceptor) is an active-site residue. Tyrosine 620 is subject to Phosphotyrosine; by autocatalysis.

It belongs to the protein kinase superfamily. CMGC Ser/Thr protein kinase family. MNB/DYRK subfamily. In terms of assembly, part of a complex, consisting of pseudophosphatases egg-3, egg-4, egg-5 and kinase mbk-2. Interacts (via Tyr-618 and Tyr-620) with egg-4 (via tyrosine-protein phosphatase domain) and egg-5 (via tyrosine-protein phosphatase domain); mbk-2 tyrosine phosphorylation enhances the interaction. The interaction inhibits mbk-2 kinase activity and is required for mbk-2 oocyte cortex localization. Interacts (via N-terminus) with egg-3 (via tyrosine-protein phosphatase domain); the interaction does not affect mbk-2 kinase activity, is enhanced by mbk-2 tyrosine phosphorylation status and requires prior binding of mbk-2 to egg-4 and egg-5. Mg(2+) is required as a cofactor. In terms of processing, autophosphorylated.

It localises to the cytoplasm. It is found in the cell cortex. The enzyme catalyses L-seryl-[protein] + ATP = O-phospho-L-seryl-[protein] + ADP + H(+). The catalysed reaction is L-threonyl-[protein] + ATP = O-phospho-L-threonyl-[protein] + ADP + H(+). It carries out the reaction L-tyrosyl-[protein] + ATP = O-phospho-L-tyrosyl-[protein] + ADP + H(+). With respect to regulation, activated during oocyte maturation by phosphorylation on Ser-361 by cdk-1. The pseudotyrosine phosphatases egg-4 and egg-5 sequester activated mbk-2 until the meiotic divisions and inhibit mbk-2 kinase activity directly, using a mixed-inhibition mechanism that does not involve tyrosine dephosphorylation. Functionally, required for oocyte-to-zygote transition in which it phosphorylates oocyte proteins, including mei-1, oma-1, oma-2, mex-5, and mex-6, modifying their activity and/or stability following meiosis. Through phosphorylation of P granule components including meg-1, promotes the disassembly of zygotic P granules in the anterior cytoplasm during zygote polarization, and thus plays a role in P granule distribution and segregation in early stage embryos following meiosis. Functions in both spindle positioning and in the posterior localization of cytoplasmic determinants, including pie-1, pos-1, and pgl-1, in early embryos. Involved in the asymmetric distribution of plk-1 at the 2-cell embryonic stage. This chain is Dual specificity tyrosine-phosphorylation-regulated kinase mbk-2, found in Caenorhabditis briggsae.